Consider the following 299-residue polypeptide: Secreted LysM effector ldpB (299 aa).

An N-terminal signal peptide occupies residues 1-19 (MGLTSILIAQVLFLGAANS). LysM domains follow at residues 46 to 91 (WVND…SYCV), 135 to 182 (AFYK…YVCI), and 211 to 258 (KYHK…YVCV). The N-linked (GlcNAc...) asparagine glycan is linked to Asn-154. Residues 266–283 (ATATPQPTPQPQQSSSPD) are compositionally biased toward low complexity. The interval 266 to 288 (ATATPQPTPQPQQSSSPDQPMPQ) is disordered.

This sequence belongs to the secreted LysM effector family.

Its subcellular location is the secreted. It is found in the cell wall. The protein localises to the extracellular space. The protein resides in the extracellular matrix. Its function is as follows. Cell wall chitin of A.fumigatus recruits lung eosinophils during infection and ldpB might have a role in sequestration of chitin and act as triggers of host immunity to dampen host defense. This chain is Secreted LysM effector ldpB, found in Aspergillus fumigatus (strain ATCC MYA-4609 / CBS 101355 / FGSC A1100 / Af293) (Neosartorya fumigata).